A 202-amino-acid chain; its full sequence is Small ribosomal subunit protein uS4 (202 aa).

The disordered stretch occupies residues T22–S43. The S4 RNA-binding domain maps to M90–N152.

The protein belongs to the universal ribosomal protein uS4 family. As to quaternary structure, part of the 30S ribosomal subunit. Contacts protein S5. The interaction surface between S4 and S5 is involved in control of translational fidelity.

In terms of biological role, one of the primary rRNA binding proteins, it binds directly to 16S rRNA where it nucleates assembly of the body of the 30S subunit. With S5 and S12 plays an important role in translational accuracy. This chain is Small ribosomal subunit protein uS4, found in Trichodesmium erythraeum (strain IMS101).